The primary structure comprises 232 residues: Phosphoglycolate phosphatase (232 aa).

The active-site Nucleophile is the D8. 2 residues coordinate Mg(2+): D8 and D10. Position 155 (K155) interacts with substrate. D178 and D182 together coordinate Mg(2+).

It belongs to the archaeal SPP-like hydrolase family. It depends on Mg(2+) as a cofactor.

The catalysed reaction is 2-phosphoglycolate + H2O = glycolate + phosphate. In terms of biological role, catalyzes the dephosphorylation of 2-phosphoglycolate. This chain is Phosphoglycolate phosphatase, found in Methanospirillum hungatei JF-1 (strain ATCC 27890 / DSM 864 / NBRC 100397 / JF-1).